Here is a 556-residue protein sequence, read N- to C-terminus: Urocanate hydratase (556 aa).

Residues 52 to 53 (GG), Gln-130, 176 to 178 (GMG), Glu-196, Arg-201, 242 to 243 (NA), 263 to 267 (QTSAH), 273 to 274 (YL), and Tyr-322 each bind NAD(+). Cys-410 is an active-site residue. Gly-492 provides a ligand contact to NAD(+).

Belongs to the urocanase family. NAD(+) serves as cofactor.

Its subcellular location is the cytoplasm. It catalyses the reaction 4-imidazolone-5-propanoate = trans-urocanate + H2O. It functions in the pathway amino-acid degradation; L-histidine degradation into L-glutamate; N-formimidoyl-L-glutamate from L-histidine: step 2/3. In terms of biological role, catalyzes the conversion of urocanate to 4-imidazolone-5-propionate. The protein is Urocanate hydratase of Bradyrhizobium sp. (strain BTAi1 / ATCC BAA-1182).